The chain runs to 466 residues: MPKNNLLRTLPKVDESIAQLRSTGVAYSSDFVLKKSVQTCIARERQGILAGKITEKRAEDSWHACFLKELKERQAPNLRRMINGTGVVIHTNLGRSLLSSQVAERLAQTASYYSNLEFDLATGKRGSRYSLVEDTICELTGAEAALVVNNNAAAVFLALDALCRGTEVIVSRGQLVEIGGSFRIPDVMARSGADLVEVGATNRTHLYDYEDAISEQTSMLLRVHTSNFRIIGFTSEVPAEEMVGLARKKNLLTMEDLGSGSLIDLTSYGFPKEPTVQELVKAGVDVVTFSGDKLLGGPQAGIIVGSKSVVERIKKSPMNRAFRVDKFTLAALEVVLRSYYDSRQALQEIPTLRMLTTGKDVLLKRARRISRRLSAKLKEKCTLRIVPTMSRVGGGAFPEHDLASWAVAFRPEHIRLSEIEKRLRKLNTPIIGRLENEKFLLDVRTIQDDEVGLLCSLLLEFFLEAS.

Lysine 293 is modified (N6-(pyridoxal phosphate)lysine).

The protein belongs to the SelA family. Pyridoxal 5'-phosphate serves as cofactor.

It is found in the cytoplasm. It carries out the reaction L-seryl-tRNA(Sec) + selenophosphate + H(+) = L-selenocysteinyl-tRNA(Sec) + phosphate. It functions in the pathway aminoacyl-tRNA biosynthesis; selenocysteinyl-tRNA(Sec) biosynthesis; selenocysteinyl-tRNA(Sec) from L-seryl-tRNA(Sec) (bacterial route): step 1/1. Functionally, converts seryl-tRNA(Sec) to selenocysteinyl-tRNA(Sec) required for selenoprotein biosynthesis. This chain is L-seryl-tRNA(Sec) selenium transferase, found in Desulfotalea psychrophila (strain LSv54 / DSM 12343).